The sequence spans 256 residues: HTH-type transcriptional regulator PrtR (256 aa).

The HTH cro/C1-type domain occupies 16–69 (LKQAMAMRNLKQETLAEAAGVSQNTIHKLTSGKAQSTRKLIEIAAALGVSPVWL). The H-T-H motif DNA-binding region spans 27–46 (QETLAEAAGVSQNTIHKLTS).

Represses the promoter activity of the prtN gene. This chain is HTH-type transcriptional regulator PrtR (prtR), found in Pseudomonas aeruginosa (strain ATCC 15692 / DSM 22644 / CIP 104116 / JCM 14847 / LMG 12228 / 1C / PRS 101 / PAO1).